The primary structure comprises 305 residues: Protoheme IX farnesyltransferase (305 aa).

The next 9 membrane-spanning stretches (helical) occupy residues 31 to 51, 53 to 73, 98 to 118, 124 to 144, 153 to 173, 181 to 201, 221 to 241, 242 to 262, and 285 to 305; these read IQVLLLITTAGAMWIAGKGHV, PLLLLVTLLGGTLAASSANAF, ILPWQAALFATALGVASFAVL, LFAALLAISGIGFYVVIYTLW, IVIGGAAGAIPPLVGWAAVTG, VLFGIIFMWTPPHFWALAMMI, ATARQIFIYTLVLVPVTLVLY, PLGTMGWIYLLAAGALGLWLI, and SIFYLMLLFVAMGIDSIFLFA.

Belongs to the UbiA prenyltransferase family. Protoheme IX farnesyltransferase subfamily.

The protein resides in the cell inner membrane. The catalysed reaction is heme b + (2E,6E)-farnesyl diphosphate + H2O = Fe(II)-heme o + diphosphate. Its pathway is porphyrin-containing compound metabolism; heme O biosynthesis; heme O from protoheme: step 1/1. In terms of biological role, converts heme B (protoheme IX) to heme O by substitution of the vinyl group on carbon 2 of heme B porphyrin ring with a hydroxyethyl farnesyl side group. This is Protoheme IX farnesyltransferase from Gloeobacter violaceus (strain ATCC 29082 / PCC 7421).